A 474-amino-acid chain; its full sequence is Cyclin-dependent kinase 18 (474 aa).

Serine 14, serine 74, serine 89, serine 98, serine 117, and serine 132 each carry phosphoserine. The disordered stretch occupies residues aspartate 44–arginine 87. The 282-residue stretch at tyrosine 144–phenylalanine 425 folds into the Protein kinase domain. ATP-binding positions include leucine 150–valine 158 and lysine 173. The active-site Proton acceptor is the aspartate 265. Serine 440 and serine 443 each carry phosphoserine.

Belongs to the protein kinase superfamily. CMGC Ser/Thr protein kinase family. CDC2/CDKX subfamily.

The catalysed reaction is L-seryl-[protein] + ATP = O-phospho-L-seryl-[protein] + ADP + H(+). It catalyses the reaction L-threonyl-[protein] + ATP = O-phospho-L-threonyl-[protein] + ADP + H(+). Its function is as follows. May play a role in signal transduction cascades in terminally differentiated cells. In Pongo abelii (Sumatran orangutan), this protein is Cyclin-dependent kinase 18 (CDK18).